The chain runs to 701 residues: Elongation factor G (701 aa).

One can recognise a tr-type G domain in the interval 8–290 (ARYRNIGISA…AVIEYLPAPT (283 aa)). GTP is bound by residues 17–24 (AHIDAGKT), 88–92 (DTPGH), and 142–145 (NKMD).

Belongs to the TRAFAC class translation factor GTPase superfamily. Classic translation factor GTPase family. EF-G/EF-2 subfamily.

Its subcellular location is the cytoplasm. Its function is as follows. Catalyzes the GTP-dependent ribosomal translocation step during translation elongation. During this step, the ribosome changes from the pre-translocational (PRE) to the post-translocational (POST) state as the newly formed A-site-bound peptidyl-tRNA and P-site-bound deacylated tRNA move to the P and E sites, respectively. Catalyzes the coordinated movement of the two tRNA molecules, the mRNA and conformational changes in the ribosome. This is Elongation factor G from Sodalis glossinidius (strain morsitans).